Consider the following 351-residue polypeptide: Putative glycosyltransferase 45 (351 aa).

Belongs to the glycosyltransferase group 1 family.

The chain is Putative glycosyltransferase 45 (SIFV0045) from Sulfolobus islandicus filamentous virus (isolate Iceland/Hveragerdi) (SIFV).